A 253-amino-acid chain; its full sequence is Mediator of RNA polymerase II transcription subunit 10 (253 aa).

Disordered regions lie at residues 32 to 63 (YDTNPSSSNNNTPTSSRASGGGGGGGGGHASS), 88 to 109 (LPSSPSSGPSNNQPQQGTTELE), and 206 to 253 (VEAT…QSGQ). A compositionally biased stretch (low complexity) spans 34–47 (TNPSSSNNNTPTSS). The span at 50–60 (SGGGGGGGGGH) shows a compositional bias: gly residues. Residues 88–104 (LPSSPSSGPSNNQPQQG) are compositionally biased toward low complexity. Gly residues predominate over residues 231 to 253 (SAGGEGQQGQGQGQQGQGQQSGQ).

This sequence belongs to the Mediator complex subunit 10 family. In terms of assembly, component of the Mediator complex.

It localises to the nucleus. Component of the Mediator complex, a coactivator involved in the regulated transcription of nearly all RNA polymerase II-dependent genes. Mediator functions as a bridge to convey information from gene-specific regulatory proteins to the basal RNA polymerase II transcription machinery. Mediator is recruited to promoters by direct interactions with regulatory proteins and serves as a scaffold for the assembly of a functional preinitiation complex with RNA polymerase II and the general transcription factors. The polypeptide is Mediator of RNA polymerase II transcription subunit 10 (nut2) (Neurospora crassa (strain ATCC 24698 / 74-OR23-1A / CBS 708.71 / DSM 1257 / FGSC 987)).